Consider the following 52-residue polypeptide: Conotoxin Cal6.3b (52 aa).

Positions Lys1–Arg4 are excised as a propeptide. Cystine bridges form between Cys12–Cys23, Cys15–Cys27, and Cys22–Cys30. Gln50 is subject to Glutamine amide.

In terms of tissue distribution, expressed by the venom duct.

The protein localises to the secreted. Functionally, probable neurotoxin with unknown target. Possibly targets ion channels. The sequence is that of Conotoxin Cal6.3b from Californiconus californicus (California cone).